The sequence spans 510 residues: Bifunctional purine biosynthesis protein PurH (510 aa).

Residues 1 to 143 (MTKRALISVS…KNHDAVLVLV (143 aa)) enclose the MGS-like domain.

Belongs to the PurH family.

It catalyses the reaction (6R)-10-formyltetrahydrofolate + 5-amino-1-(5-phospho-beta-D-ribosyl)imidazole-4-carboxamide = 5-formamido-1-(5-phospho-D-ribosyl)imidazole-4-carboxamide + (6S)-5,6,7,8-tetrahydrofolate. The catalysed reaction is IMP + H2O = 5-formamido-1-(5-phospho-D-ribosyl)imidazole-4-carboxamide. The protein operates within purine metabolism; IMP biosynthesis via de novo pathway; 5-formamido-1-(5-phospho-D-ribosyl)imidazole-4-carboxamide from 5-amino-1-(5-phospho-D-ribosyl)imidazole-4-carboxamide (10-formyl THF route): step 1/1. Its pathway is purine metabolism; IMP biosynthesis via de novo pathway; IMP from 5-formamido-1-(5-phospho-D-ribosyl)imidazole-4-carboxamide: step 1/1. The protein is Bifunctional purine biosynthesis protein PurH of Deinococcus radiodurans (strain ATCC 13939 / DSM 20539 / JCM 16871 / CCUG 27074 / LMG 4051 / NBRC 15346 / NCIMB 9279 / VKM B-1422 / R1).